We begin with the raw amino-acid sequence, 102 residues long: Small ribosomal subunit protein uS10 (102 aa).

This sequence belongs to the universal ribosomal protein uS10 family. In terms of assembly, part of the 30S ribosomal subunit.

Functionally, involved in the binding of tRNA to the ribosomes. This Methanococcus maripaludis (strain C7 / ATCC BAA-1331) protein is Small ribosomal subunit protein uS10.